The following is a 393-amino-acid chain: STE20-related kinase adapter protein alpha (393 aa).

Phosphoserine is present on residues S2 and S9. Residues 32–341 (YELLSVIGKG…ASTLLNHSFF (310 aa)) enclose the Protein kinase domain. Position 381 is a phosphothreonine; by LKB1 (T381).

The protein belongs to the protein kinase superfamily. STE Ser/Thr protein kinase family. STE20 subfamily. In terms of assembly, component of a trimeric complex composed of STK11/LKB1, STRAD (STRADA or STRADB) and CAB39/MO25 (CAB39/MO25alpha or CAB39L/MO25beta): the complex tethers STK11/LKB1 in the cytoplasm and stimulates its catalytic activity. In terms of tissue distribution, expressed in liver.

It is found in the nucleus. The protein resides in the cytoplasm. Its function is as follows. Pseudokinase which, in complex with CAB39/MO25 (CAB39/MO25alpha or CAB39L/MO25beta), binds to and activates STK11/LKB1. Adopts a closed conformation typical of active protein kinases and binds STK11/LKB1 as a pseudosubstrate, promoting conformational change of STK11/LKB1 in an active conformation. This chain is STE20-related kinase adapter protein alpha (Strada), found in Rattus norvegicus (Rat).